A 129-amino-acid polypeptide reads, in one-letter code: Large ribosomal subunit protein bL21 (129 aa).

This sequence belongs to the bacterial ribosomal protein bL21 family. As to quaternary structure, part of the 50S ribosomal subunit. Contacts protein L20.

Functionally, this protein binds to 23S rRNA in the presence of protein L20. This Microcystis aeruginosa (strain NIES-843 / IAM M-2473) protein is Large ribosomal subunit protein bL21.